The primary structure comprises 475 residues: AAA-ATPase At1g43910 (475 aa).

A helical transmembrane segment spans residues 11 to 28 (VSAVFSLYTSFSAITMLF). A Phosphothreonine modification is found at threonine 85. 246 to 253 (GPPGTGKS) contacts ATP. Disordered regions lie at residues 306–328 (SRRR…PQKR) and 453–475 (KGED…EAET). A compositionally biased stretch (acidic residues) spans 457 to 467 (SSVEEEGEIED).

It belongs to the AAA ATPase family. BCS1 subfamily. Mg(2+) is required as a cofactor. Expressed in developing shoots.

It is found in the membrane. The enzyme catalyses ATP + H2O = ADP + phosphate + H(+). The sequence is that of AAA-ATPase At1g43910 from Arabidopsis thaliana (Mouse-ear cress).